The primary structure comprises 306 residues: MLKNRNLINADDFNVEEINEILNLAEEIIKSPSDFSNLCNGKILGTLFFEPSTRTRLSFESAIHRLGGDCIGFSESASSSTSKGESLADTIRTVSNYTDIIAMRNPKEGSAVLASSYAEVPLINAGDGGHQHPTQTLTDLLTIWMTKKKLDNMTIGLCGDLKFGRTVHSLIKAMSRYENNKFILISPEELQVPDYIKMFLKSKNIEFKEVEKMEDVIGELDVLYMTRVQKERFFNEADYVRLKDSYILDNDKMKLATEDLAVLHPLPRVNEIATEVDSDPRAVYFKQVRYGVIVRMALILKLLGVR.

Residues Arg54 and Thr55 each contribute to the carbamoyl phosphate site. Lys83 is an L-aspartate binding site. The carbamoyl phosphate site is built by Arg104, His132, and Gln135. 2 residues coordinate L-aspartate: Arg165 and Arg227. Residues Leu266 and Pro267 each contribute to the carbamoyl phosphate site.

Belongs to the aspartate/ornithine carbamoyltransferase superfamily. ATCase family. In terms of assembly, heterododecamer (2C3:3R2) of six catalytic PyrB chains organized as two trimers (C3), and six regulatory PyrI chains organized as three dimers (R2).

The catalysed reaction is carbamoyl phosphate + L-aspartate = N-carbamoyl-L-aspartate + phosphate + H(+). It participates in pyrimidine metabolism; UMP biosynthesis via de novo pathway; (S)-dihydroorotate from bicarbonate: step 2/3. Its function is as follows. Catalyzes the condensation of carbamoyl phosphate and aspartate to form carbamoyl aspartate and inorganic phosphate, the committed step in the de novo pyrimidine nucleotide biosynthesis pathway. The polypeptide is Aspartate carbamoyltransferase catalytic subunit (Finegoldia magna (strain ATCC 29328 / DSM 20472 / WAL 2508) (Peptostreptococcus magnus)).